The primary structure comprises 1070 residues: MTVSTEVDHNDYTGNGVTTSFPYTFRIFKKSDLVVQVVDLNENITELILDTDYTVTGAGGYTCGDVVLSSPLANGYQISISRELPVTQETDLRNQGKFFAEVHENAFDKLTMLIQQVRSWLSLALRKPSFVANYYDALGNYIRNLRDPSRPQDAATKNYVDNLSEGNNSYADNLFSRTLRVPEKINTLPSSLDRANKIPAFDSNGNAIVIIPQSGSASDVLIELAKPSGSGLVGFSHSNNYNPGMVGEKLQNVVYPTDAPFYAPTDGTSDATTALQSAITHCEGKNAVLCINKSFSVSDSLSISSPLCVFAMNEQCGIVSSAPAGHAAVIFNGDNICWNGGFIRGLNQPSSSTIRQDGVLLNGNDCVLDNVSINGFFAKGLHTSNADGSGVGIRDYGTRNTISKCRVEYNKFGISLEGKDGWVLGNYVSNHYRMSSEAKPWDDTSNYWDGIVGGGEWLGVATGYLIDGNEFEDNGQSGIYAGGNGGIFAKNRITNNHIHGNWNRGIDFGVVQRLANSDVYENIITDNIVHNNRAANIWLAGVRDSIINNNNSWFTDDYRSMFAGNFDACVCLTLADGGEKAAPTGNQVNGNRCKTLESDDQISGFTLNITDTARGNQVRDNVLSPIGEAYIPNPELYAVNNIDIPTEFAFTPQLIGGSGVTLGNSSGKLTANGNVFSLSLSISAQSVSSPSGSLTIGYIPGLSGTSVRHHNVRTEFYNNLNTTMQRAQPYVNIGDSADQLRVYRLADGLSKDDLLEYFMSNSDLRMVGDIEIEPYNFSRSVTVVGHSFCTSDVMSTELNRLLGTDIYNFARGGASDVEVAMSQEAITRQYAPVGGSIPASGSVALTPTEVGIFWNGATGKCIFGGIDGTFSTTLVNAGTGETQLVFTRDSAGSAVSVSTTATFAMRPYTRFNTNTIPAGRKHSLHRDDIYIVWGGRNSTDYTRYVSELHTMVANMHTQRFVICPEFPYDTETTGTTGATNLAALNNNLKADFPDNYCQISGVDLLQNFKSKYNPAYAGDVTDIANGITPRSLREDNLHPSETLQPNGLYIGAKVNADFIAQFIKSKGWGG.

Its subcellular location is the virion. Its function is as follows. Structural component of the short non-contractile tail. The tail comprises six spikes that mediate primary attachment to the host cell lipopolysaccharides (LPS) and display endorhamnosidase enzymatic activity, hydrolyzing the linkage between rhamnose and galactose of the O-antigen polysaccharide. Digestion of the LPS brings the capsid near the cell outer membrane. This Salmonella phage epsilon15 protein is Tail spike protein.